Reading from the N-terminus, the 540-residue chain is Chaperonin GroEL (540 aa).

Residues 29–32 (TLGP), 86–90 (DGTTT), Gly413, 476–478 (NAA), and Asp492 contribute to the ATP site.

This sequence belongs to the chaperonin (HSP60) family. As to quaternary structure, forms a cylinder of 14 subunits composed of two heptameric rings stacked back-to-back. Interacts with the co-chaperonin GroES.

The protein localises to the cytoplasm. The enzyme catalyses ATP + H2O + a folded polypeptide = ADP + phosphate + an unfolded polypeptide.. In terms of biological role, together with its co-chaperonin GroES, plays an essential role in assisting protein folding. The GroEL-GroES system forms a nano-cage that allows encapsulation of the non-native substrate proteins and provides a physical environment optimized to promote and accelerate protein folding. In Streptococcus constellatus, this protein is Chaperonin GroEL.